Here is a 189-residue protein sequence, read N- to C-terminus: HGPRTase-like protein (189 aa).

This sequence belongs to the purine/pyrimidine phosphoribosyltransferase family. Archaeal HPRT subfamily.

Functionally, may catalyze a purine salvage reaction, the substrate is unknown. The protein is HGPRTase-like protein of Halorubrum lacusprofundi (strain ATCC 49239 / DSM 5036 / JCM 8891 / ACAM 34).